The following is a 94-amino-acid chain: MIKSELVQKIAEANPHLYQRDVENIVNAILEQVASALERGDRVELRGFGAFSVKKRDARVGRNPRTGKQVDVSEKTVPYFKTGKEMRERLNTGK.

It belongs to the bacterial histone-like protein family. In terms of assembly, heterodimer of an alpha and a beta chain.

Its function is as follows. This protein is one of the two subunits of integration host factor, a specific DNA-binding protein that functions in genetic recombination as well as in transcriptional and translational control. The sequence is that of Integration host factor subunit beta from Xanthobacter autotrophicus (strain ATCC BAA-1158 / Py2).